The sequence spans 105 residues: DNA-directed RNA polymerase subunit omega (105 aa).

This sequence belongs to the RNA polymerase subunit omega family. As to quaternary structure, the RNAP catalytic core consists of 2 alpha, 1 beta, 1 beta' and 1 omega subunit. When a sigma factor is associated with the core the holoenzyme is formed, which can initiate transcription.

The enzyme catalyses RNA(n) + a ribonucleoside 5'-triphosphate = RNA(n+1) + diphosphate. Its function is as follows. Promotes RNA polymerase assembly. Latches the N- and C-terminal regions of the beta' subunit thereby facilitating its interaction with the beta and alpha subunits. The chain is DNA-directed RNA polymerase subunit omega from Streptococcus equi subsp. zooepidemicus (strain MGCS10565).